The primary structure comprises 743 residues: Protein will decrease acetylation (743 aa).

WD repeat units lie at residues Glu-389 to Lys-428, Leu-493 to Trp-524, Tyr-535 to Ile-576, Tyr-577 to Val-618, Phe-619 to Glu-660, and Leu-661 to Asp-702.

This sequence belongs to the WD repeat TAF5 family. In terms of assembly, component of the Spt-Ada-Gcn5 acetyltransferase (SAGA) complex consisting of wda/Taf5L, Saf6, Taf9, Taf10b, Taf12, Ada1, Spt3, Spt7, Spt20, Sf3b3, Sf3b5, Nipped-A/Tra1, a histone acetyltransferase (HAT) module made up of Gcn5, Ada2b (Isoform B), Ada3 and Sgf29, and a deubiquitinase (DUB) module made up of not/nonstop, Sgf11 and e(y)2 tethered to SAGA by Atxn7. Not essential for the assembly or integrity of the SAGA complex. Not a component of the Ada2a-containing ATAC complex.

The protein resides in the nucleus. The protein localises to the chromosome. Functionally, component of the transcription regulatory complex SAGA, a multiprotein complex that activates transcription by remodeling chromatin and mediating histone acetylation and deubiquitination. The SAGA complex predominantly acetylates histone H3. Involved in acetylation of histone H3 on 'Lys-10' (H3K9ac) by the SAGA complex in the larval central nervous system. Involved in SAGA complex coactivator functions. Required for oogenesis. This Drosophila melanogaster (Fruit fly) protein is Protein will decrease acetylation.